The chain runs to 314 residues: PDZ domain-containing protein GIPC2 (314 aa).

Residues 1–12 (MPLGLRGKKKAA) are compositionally biased toward basic residues. A disordered region spans residues 1-36 (MPLGLRGKKKAAKSKEAARLVEGERSSGSQGVPGPP). The span at 13 to 25 (KSKEAARLVEGER) shows a compositional bias: basic and acidic residues. The region spanning 117 to 197 (EVNVYKSEDS…EELFTLQLIE (81 aa)) is the PDZ domain.

Belongs to the GIPC family. As to quaternary structure, probably interacts with SEMA5A. Expressed in kidney and lung (at protein level).

It localises to the cytoplasm. This is PDZ domain-containing protein GIPC2 (Gipc2) from Mus musculus (Mouse).